A 156-amino-acid polypeptide reads, in one-letter code: MTVRIEDKSAERVVGVRVVGPYPQTIPQGCQRLMAWQQQHQVPLGKWLVLYWDDPAEVAPERLRADVVFTVADDFVLPTSGSEGFALQTLPAGQYAIYNVRVSDGDFERVWGDFYQRELPASGYQPVEGVSYEHYLNDCEADGYFDLDIYQTVKKG.

The protein belongs to the DNA gyrase inhibitor family. Interacts with DNA gyrase.

The protein resides in the cytoplasm. Its function is as follows. Inhibits the supercoiling activity of DNA gyrase. Acts by inhibiting DNA gyrase at an early step, prior to (or at the step of) binding of DNA by the gyrase. It protects cells against toxins that target DNA gyrase, by inhibiting activity of these toxins and reducing the formation of lethal double-strand breaks in the cell. The chain is DNA gyrase inhibitor from Serratia proteamaculans (strain 568).